The sequence spans 160 residues: UPF0260 protein Rleg2_0895 (160 aa).

The protein belongs to the UPF0260 family.

The polypeptide is UPF0260 protein Rleg2_0895 (Rhizobium leguminosarum bv. trifolii (strain WSM2304)).